The chain runs to 297 residues: tRNA pseudouridine synthase B (297 aa).

The active-site Nucleophile is the aspartate 44.

Belongs to the pseudouridine synthase TruB family. Type 1 subfamily.

The enzyme catalyses uridine(55) in tRNA = pseudouridine(55) in tRNA. In terms of biological role, responsible for synthesis of pseudouridine from uracil-55 in the psi GC loop of transfer RNAs. This chain is tRNA pseudouridine synthase B, found in Corynebacterium efficiens (strain DSM 44549 / YS-314 / AJ 12310 / JCM 11189 / NBRC 100395).